Here is a 99-residue protein sequence, read N- to C-terminus: UPF0045 protein MTH_1187 (99 aa).

This sequence belongs to the UPF0045 family. In terms of assembly, homotetramer.

The sequence is that of UPF0045 protein MTH_1187 from Methanothermobacter thermautotrophicus (strain ATCC 29096 / DSM 1053 / JCM 10044 / NBRC 100330 / Delta H) (Methanobacterium thermoautotrophicum).